Consider the following 195-residue polypeptide: Translation machinery-associated protein 22 (195 aa).

Residues 94-165 (VLIKRIERNR…EAKEYIEKLL (72 aa)) form the SUI1 domain. The segment at 176 to 195 (EQVDEKKKKKATAPGATPAA) is disordered.

Belongs to the DENR family. As to quaternary structure, interacts with the 40S ribosomal subunit.

The protein resides in the cytoplasm. In Scheffersomyces stipitis (strain ATCC 58785 / CBS 6054 / NBRC 10063 / NRRL Y-11545) (Yeast), this protein is Translation machinery-associated protein 22 (TMA22).